We begin with the raw amino-acid sequence, 130 residues long: Large ribosomal subunit protein bL19 (130 aa).

This sequence belongs to the bacterial ribosomal protein bL19 family.

Its function is as follows. This protein is located at the 30S-50S ribosomal subunit interface and may play a role in the structure and function of the aminoacyl-tRNA binding site. The polypeptide is Large ribosomal subunit protein bL19 (Burkholderia vietnamiensis (strain G4 / LMG 22486) (Burkholderia cepacia (strain R1808))).